Consider the following 494-residue polypeptide: UPF0164 protein TP_0859/TP_0860 (494 aa).

The signal sequence occupies residues 1 to 44 (MVRRPCVSAAPVRVGGRLVFGFARVGSRGLCLGALLLSPRIVLA).

The protein belongs to the UPF0164 family.

This Treponema pallidum (strain Nichols) protein is UPF0164 protein TP_0859/TP_0860.